The sequence spans 240 residues: tRNA (guanine-N(1)-)-methyltransferase (240 aa).

S-adenosyl-L-methionine is bound by residues G110 and 129 to 134; that span reads LGDFVL.

The protein belongs to the RNA methyltransferase TrmD family. In terms of assembly, homodimer.

Its subcellular location is the cytoplasm. It catalyses the reaction guanosine(37) in tRNA + S-adenosyl-L-methionine = N(1)-methylguanosine(37) in tRNA + S-adenosyl-L-homocysteine + H(+). In terms of biological role, specifically methylates guanosine-37 in various tRNAs. In Clostridium botulinum (strain ATCC 19397 / Type A), this protein is tRNA (guanine-N(1)-)-methyltransferase.